Here is a 517-residue protein sequence, read N- to C-terminus: Crotonobetaine/carnitine--CoA ligase (517 aa).

Belongs to the ATP-dependent AMP-binding enzyme family.

The catalysed reaction is 4-(trimethylamino)butanoate + ATP + CoA = 4-(trimethylamino)butanoyl-CoA + AMP + diphosphate. It carries out the reaction crotonobetaine + ATP + CoA = crotonobetainyl-CoA + AMP + diphosphate. The enzyme catalyses (R)-carnitine + ATP + CoA = (R)-carnitinyl-CoA + AMP + diphosphate. It participates in amine and polyamine metabolism; carnitine metabolism. In terms of biological role, catalyzes the transfer of CoA to carnitine, generating the initial carnitinyl-CoA needed for the CaiB reaction cycle. Also has activity toward crotonobetaine and gamma-butyrobetaine. This Salmonella heidelberg (strain SL476) protein is Crotonobetaine/carnitine--CoA ligase.